The following is a 490-amino-acid chain: Ribosomal L1 domain-containing protein 1 (490 aa).

Residue methionine 1 is modified to N-acetylmethionine. Over residues 1 to 27 the composition is skewed to low complexity; the sequence is MEDSASASLSSAAATGTSTSTPAAPTA. A disordered region spans residues 1-33; sequence MEDSASASLSSAAATGTSTSTPAAPTARKQLDK. Residues lysine 120 and lysine 254 each participate in a glycyl lysine isopeptide (Lys-Gly) (interchain with G-Cter in SUMO2) cross-link. A compositionally biased stretch (basic residues) spans 280 to 293; sequence LNKKKKEARRKRRE. Positions 280-313 form a coiled coil; sequence LNKKKKEARRKRRERNFEKQKERKKKRQQARKTA. The interval 280-490 is disordered; that stretch reads LNKKKKEARR…PKKPKVPQST (211 aa). Basic and acidic residues predominate over residues 329 to 343; it reads TVKKPESKKEQTPEH. Threonine 340 is subject to Phosphothreonine. Over residues 344-353 the composition is skewed to basic residues; it reads GKKKRGRGKA. Residue threonine 358 is modified to Phosphothreonine. Serine 361 bears the Phosphoserine mark. Phosphothreonine is present on threonine 375. Residues 376-385 show a composition bias toward basic and acidic residues; that stretch reads PANEKVEIQK. Residue lysine 380 forms a Glycyl lysine isopeptide (Lys-Gly) (interchain with G-Cter in SUMO2) linkage. Residues serine 392 and serine 396 each carry the phosphoserine modification. Threonine 415 and threonine 423 each carry phosphothreonine. A Phosphoserine modification is found at serine 427. Residues 427 to 460 show a composition bias toward basic and acidic residues; it reads SPEKKPKIKEEAVKEKSPSLGKKDARQTPKKPEA. Residue lysine 435 forms a Glycyl lysine isopeptide (Lys-Gly) (interchain with G-Cter in SUMO2) linkage. Serine 443 bears the Phosphoserine mark. Lysine 461 is covalently cross-linked (Glycyl lysine isopeptide (Lys-Gly) (interchain with G-Cter in SUMO2)). Residue threonine 465 is modified to Phosphothreonine. Position 468 is an N6-acetyllysine (lysine 468). Serine 469 bears the Phosphoserine mark. Residues 469–490 show a composition bias toward basic residues; sequence SVRKASHTPKKWPKKPKVPQST.

Belongs to the universal ribosomal protein uL1 family. Highly divergent. As to quaternary structure, interacts with ING1 (isoform 2). Interacts with KPNA7 and KPNA2. In terms of tissue distribution, expressed at high intensities in the heart, skeletal muscle, and placenta.

It is found in the nucleus. Its subcellular location is the nucleolus. Its function is as follows. Regulates cellular senescence through inhibition of PTEN translation. Acts as a pro-apoptotic regulator in response to DNA damage. This Homo sapiens (Human) protein is Ribosomal L1 domain-containing protein 1 (RSL1D1).